We begin with the raw amino-acid sequence, 279 residues long: Protein SCO2 homolog, mitochondrial (279 aa).

Residues 73-90 traverse the membrane as a helical segment; the sequence is LVVTLLFGGGIIGTWWYV. Over 91–279 the chain is Mitochondrial intermembrane; sequence HQEKEKRIQM…MKTFVRLFPD (189 aa). The region spanning 97–271 is the Thioredoxin domain; that stretch reads RIQMQRLEQL…IAESIRNHMK (175 aa). Cu cation contacts are provided by C145, C149, and H236. Residues C145 and C149 are joined by a disulfide bond.

This sequence belongs to the SCO1/2 family. Homodimer.

The protein resides in the mitochondrion inner membrane. Its function is as follows. Copper metallochaperone essential for the synthesis and maturation of cytochrome c oxidase subunit II (MT-CO2/COX2) by facilitating the incorporation of copper into the Cu(A) site of MT-CO2/COX2. Could also act as a thiol-disulfide oxidoreductase to regulate the redox state of the cysteines in SCO1 during maturation of MT-CO2/COX2. This is Protein SCO2 homolog, mitochondrial (sco2) from Danio rerio (Zebrafish).